Consider the following 421-residue polypeptide: Alpha-tubulin N-acetyltransferase 1 (421 aa).

The 190-residue stretch at M1–F190 folds into the N-acetyltransferase domain. K56 carries the N6-acetyllysine; by autocatalysis modification. F124–R137 serves as a coordination point for acetyl-CoA. At K146 the chain carries N6-acetyllysine; by autocatalysis. S160–K169 lines the acetyl-CoA pocket. Positions P196–Y235 are disordered. Residues A209–R221 show a composition bias toward low complexity. Residues K226–Y235 are compositionally biased toward basic and acidic residues. Residues K233 and K244 each carry the N6-acetyllysine; by autocatalysis modification. Residues P252–P284 form a disordered region. Residues S272 and S276 each carry the phosphoserine modification. Residue R305 is modified to Asymmetric dimethylarginine. Residues L306 to D402 form a disordered region. Position 315 is a phosphoserine (S315). R323 carries the omega-N-methylarginine modification. Residues V342 to S354 are compositionally biased toward polar residues. Residues K355–S367 show a composition bias toward basic and acidic residues.

Belongs to the acetyltransferase ATAT1 family. In terms of assembly, component of the BBSome complex. Interacts with AP2 alpha-adaptins, including AP2A2, but not with AP1 gamma-adaptin (AP1G1/AP1G2); this interaction is required for efficient alpha-tubulin acetylation, hence clathrin-coated pits are sites of microtubule acetylation. Post-translationally, autoacetylation strongly increases tubulin acetylation.

It localises to the cytoplasm. The protein localises to the membrane. Its subcellular location is the clathrin-coated pit. The protein resides in the cell junction. It is found in the focal adhesion. It localises to the cell projection. The protein localises to the axon. Its subcellular location is the cytoskeleton. The protein resides in the spindle. The enzyme catalyses L-lysyl-[alpha-tubulin] + acetyl-CoA = N(6)-acetyl-L-lysyl-[alpha-tubulin] + CoA + H(+). Functionally, specifically acetylates 'Lys-40' in alpha-tubulin on the lumenal side of microtubules. Promotes microtubule destabilization and accelerates microtubule dynamics; this activity may be independent of acetylation activity. Acetylates alpha-tubulin with a slow enzymatic rate, due to a catalytic site that is not optimized for acetyl transfer. Enters the microtubule through each end and diffuses quickly throughout the lumen of microtubules. Acetylates only long/old microtubules because of its slow acetylation rate since it does not have time to act on dynamically unstable microtubules before the enzyme is released. Required for normal sperm flagellar function. Promotes directional cell locomotion and chemotaxis, through AP2A2-dependent acetylation of alpha-tubulin at clathrin-coated pits that are concentrated at the leading edge of migrating cells. May facilitate primary cilium assembly. The polypeptide is Alpha-tubulin N-acetyltransferase 1 (Homo sapiens (Human)).